The chain runs to 440 residues: UDP-glycosyltransferase 87A1 (440 aa).

UDP-alpha-D-glucose-binding positions include Ser263, Cys312 to Gln314, His329 to Glu337, and Phe351 to Gln354.

The protein belongs to the UDP-glycosyltransferase family.

The protein is UDP-glycosyltransferase 87A1 (UGT87A1) of Arabidopsis thaliana (Mouse-ear cress).